The chain runs to 458 residues: Cysteine protease ATG4C (458 aa).

An N-acetylmethionine modification is found at methionine 1. Cysteine 111 serves as the catalytic Nucleophile. Catalysis depends on residues aspartate 345 and histidine 347. The residue at position 451 (serine 451) is a Phosphoserine. Threonine 452 is modified (phosphothreonine).

This sequence belongs to the peptidase C54 family.

The protein resides in the cytoplasm. The enzyme catalyses [protein]-C-terminal L-amino acid-glycyl-phosphatidylethanolamide + H2O = [protein]-C-terminal L-amino acid-glycine + a 1,2-diacyl-sn-glycero-3-phosphoethanolamine. Inhibited by N-ethylmaleimide. In terms of biological role, cysteine protease that plays a key role in autophagy by mediating both proteolytic activation and delipidation of ATG8 family proteins. The protease activity is required for proteolytic activation of ATG8 family proteins: cleaves the C-terminal amino acid of ATG8 proteins MAP1LC3 and GABARAPL2, to reveal a C-terminal glycine. Exposure of the glycine at the C-terminus is essential for ATG8 proteins conjugation to phosphatidylethanolamine (PE) and insertion to membranes, which is necessary for autophagy. In addition to the protease activity, also mediates delipidation of ATG8 family proteins. Catalyzes delipidation of PE-conjugated forms of ATG8 proteins during macroautophagy. Compared to ATG4B, the major protein for proteolytic activation of ATG8 proteins, shows weaker ability to cleave the C-terminal amino acid of ATG8 proteins, while it displays stronger delipidation activity. In contrast to other members of the family, weakly or not involved in phagophore growth during mitophagy. The chain is Cysteine protease ATG4C from Mus musculus (Mouse).